We begin with the raw amino-acid sequence, 62 residues long: Photosystem II reaction center protein Z (62 aa).

A run of 2 helical transmembrane segments spans residues 8 to 28 and 41 to 61; these read TLFA…VVFA and FSGI…NSFV.

Belongs to the PsbZ family. As to quaternary structure, PSII is composed of 1 copy each of membrane proteins PsbA, PsbB, PsbC, PsbD, PsbE, PsbF, PsbH, PsbI, PsbJ, PsbK, PsbL, PsbM, PsbT, PsbY, PsbZ, Psb30/Ycf12, at least 3 peripheral proteins of the oxygen-evolving complex and a large number of cofactors. It forms dimeric complexes.

The protein resides in the plastid. The protein localises to the chloroplast thylakoid membrane. Its function is as follows. May control the interaction of photosystem II (PSII) cores with the light-harvesting antenna, regulates electron flow through the 2 photosystem reaction centers. PSII is a light-driven water plastoquinone oxidoreductase, using light energy to abstract electrons from H(2)O, generating a proton gradient subsequently used for ATP formation. This Tupiella akineta (Green alga) protein is Photosystem II reaction center protein Z.